A 237-amino-acid polypeptide reads, in one-letter code: Protein PetR (237 aa).

In terms of domain architecture, Response regulatory spans 8–121; sequence HLLIVDDDER…ELLLRINAIL (114 aa). Asp-57 is modified (4-aspartylphosphate). A DNA-binding region (H-T-H motif) is located at residues 77-95; the sequence is ATPILLLTARGETRERIEG. The ompR/PhoB-type DNA-binding region spans 132-236; sequence PKYLSLGPLR…VRGLGYMLAP (105 aa).

Functionally, necessary for photosynthetic and respiratory growth. Probable promoter-specific protein mediating the interaction between DNA and RNA polymerase. In Rhodobacter capsulatus (strain ATCC BAA-309 / NBRC 16581 / SB1003), this protein is Protein PetR (petR).